A 383-amino-acid polypeptide reads, in one-letter code: Ovalbumin (383 aa).

N-acetylglycine is present on Gly2. Residues His22–Asp48 constitute a signal peptide (not cleaved). A Phosphoserine modification is found at Ser69. Cys74 and Cys121 form a disulfide bridge. 2 N-linked (GlcNAc...) asparagine glycosylation sites follow: Asn293 and Asn312. At Ser345 the chain carries Phosphoserine.

This sequence belongs to the serpin family. Ov-serpin subfamily. In terms of processing, the signal sequence is not cleaved. The functional signal for membrane translocation of ovalbumin becomes accessible when the nascent chain is 50 to 60 residues long. The hydrophobic sequence which lies between residues 27 and 43 folds back on the preceding residues to form an amphipathic hairpin structure which is the signal element recognized by the membrane. As to expression, major protein of egg white.

It localises to the secreted. In terms of biological role, storage protein of egg white. Lack protease inhibitory activity. This chain is Ovalbumin (SERPINB14), found in Coturnix japonica (Japanese quail).